A 658-amino-acid chain; its full sequence is Deoxynucleoside triphosphate triphosphohydrolase SAMHD1 (658 aa).

The segment at S23–D68 is disordered. Residue S49 is modified to Phosphoserine. Residue T52 is modified to Phosphothreonine. S55 is subject to Phosphoserine. At T56 the chain carries Phosphothreonine. Residues S64 and S125 each carry the phosphoserine modification. Residues W77–S142 enclose the SAM domain. GTP is bound by residues K148 and V149. Residue N151 coordinates dGTP. D169, Q174, and R177 together coordinate GTP. 2 residues coordinate dGTP: L182 and V188. An HD domain is found at R196–F348. Residues H199, H238, and D239 each contribute to the Mn(2+) site. Residues D239, H247, H265, and E266 each coordinate dGTP. The active site involves H265. D343 contacts Mn(2+). Residues Y347, D351, R365, R395, K397, N401, Y417, H419, and K420 each coordinate dGTP. Residues R494 and K498 each coordinate GTP. K509 participates in a covalent cross-link: Glycyl lysine isopeptide (Lys-Gly) (interchain with G-Cter in SUMO2). K565 contributes to the GTP binding site. K565 provides a ligand contact to dGTP. A Phosphothreonine modification is found at T634. T634 is subject to (Microbial infection) Phosphothreonine.

Belongs to the SAMHD1 family. In terms of assembly, homodimer; in absence of GTP and dNTP. Homotetramer; in GTP- and dNTP-bound form. Interacts with MRE11; leading to stimulate the exonuclease activity of MRE11. Interacts with RBBP8/CtIP. Interacts with RBBP8/CtIP. Interacts (via its C-terminus) with CD81. The cofactor is Zn(2+). In terms of processing, phosphorylation at Thr-634 by CDK1 acts as a switch to control deoxynucleoside triphosphate (dNTPase)-dependent and -independent functions. Phosphorylation at Thr-634 takes place in cycling cells: it reduces the stability of the homotetramer, impairing the dNTPase activity and subsequent ability to restrict infection by viruses. It also inhibits ability to suppress LINE-1 retrotransposon activity. In contrast, phosphorylation at Thr-634 promotes DNA end resection at stalled replication forks in response to DNA damage. (Microbial infection) Phosphorylation at Thr-634 by mouse cytomegalovirus kinase M97 leads to a reduced level of dNTP hydrolase activity and the loss of viral restriction. Post-translationally, not phosphorylated by CDK1 at the C-terminus.

The protein localises to the nucleus. It localises to the chromosome. It carries out the reaction a 2'-deoxyribonucleoside 5'-triphosphate + H2O = a 2'-deoxyribonucleoside + triphosphate + H(+). The enzyme catalyses dATP + H2O = 2'-deoxyadenosine + triphosphate + H(+). The catalysed reaction is dCTP + H2O = 2'-deoxycytidine + triphosphate + H(+). It catalyses the reaction dGTP + H2O = 2'-deoxyguanosine + triphosphate + H(+). It carries out the reaction dTTP + H2O = thymidine + triphosphate + H(+). With respect to regulation, allosterically activated and regulated via the combined actions of GTP and dNTPs (dATP, dGTP, dTTP and dCTP): Allosteric site 1 binds GTP, while allosteric site 2 binds dNTP. Allosteric activation promotes the formation of highly active homotetramers. Isoform 1: Phosphorylation at Thr-634 impairs homotetramerization, thereby inhibiting dNTPase activity, leading to reduced ability to restrict infection by viruses. In terms of biological role, protein that acts both as a host restriction factor involved in defense response to virus and as a regulator of DNA end resection at stalled replication forks. Has deoxynucleoside triphosphate (dNTPase) activity, which is required to restrict infection by viruses: dNTPase activity reduces cellular dNTP levels to levels too low for retroviral reverse transcription to occur, blocking early-stage virus replication in dendritic and other myeloid cells. Likewise, suppresses LINE-1 retrotransposon activity. In addition to virus restriction, dNTPase activity acts as a regulator of DNA precursor pools by regulating dNTP pools. Phosphorylation at Thr-634 acts as a switch to control dNTPase-dependent and -independent functions: it inhibits dNTPase activity and ability to restrict infection by viruses, while it promotes DNA end resection at stalled replication forks. Functions during S phase at stalled DNA replication forks to promote the resection of gapped or reversed forks: acts by stimulating the exonuclease activity of MRE11, activating the ATR-CHK1 pathway and allowing the forks to restart replication. Its ability to promote degradation of nascent DNA at stalled replication forks is required to prevent induction of type I interferons, thereby preventing chronic inflammation. Ability to promote DNA end resection at stalled replication forks is independent of dNTPase activity. Enhances immunoglobulin hypermutation in B-lymphocytes by promoting transversion mutation. In Mus musculus (Mouse), this protein is Deoxynucleoside triphosphate triphosphohydrolase SAMHD1.